A 322-amino-acid polypeptide reads, in one-letter code: METLILTQEEVESLISMDEAMNAVEEAFRLYALGKAQMPPKVYLEFEKGDLRAMPAHLMGYAGLKWVNSHPGNPDKGLPTVMALMILNSPETGFPLAVMDATYTTSLRTGAAGGIAAKYLARKNSSVFGFIGCGTQAYFQLEALRRVFDIGEVKAYDVREKAAKKFVSYCEDRGISASVQPAEEASRCDVLVTTTPSRKPVVKAEWVEEGTHINAIGADGPGKQELDVEILKKAKIVVDDLEQAKHGGEINVAVSKGVIGVEDVHATIGEVIAGLKDGRESDEEITIFDSTGLAIQDVAVAKVVYENALSKNVGSKIKFFRI.

Lys-65 functions as the Proton donor/acceptor in the catalytic mechanism. NAD(+)-binding positions include Arg-108, 135 to 136, 157 to 159, 217 to 219, Lys-223, and Ser-290; these read TQ, DVR, and GAD.

This sequence belongs to the ornithine cyclodeaminase/mu-crystallin family. Archaeal alanine dehydrogenase subfamily. As to quaternary structure, homodimer.

It carries out the reaction L-alanine + NAD(+) + H2O = pyruvate + NH4(+) + NADH + H(+). Its function is as follows. Catalyzes the NAD(+)-dependent oxidative deamination of L-alanine to pyruvate, and the reverse reaction, the reductive amination of pyruvate. Its physiological role is not known. Cannot use NADP(+) instead of NAD(+) as a cosubstrate. In the deamination direction, can also efficiently use L-2-aminobutyrate as substrate. In the reductive amination direction, also exhibits high activity with 2-oxobutyrate and oxaloacetate as substrate. In contrast to bacterial homologs, does not exhibit any ornithine cyclodeaminase activity. In Archaeoglobus fulgidus (strain ATCC 49558 / DSM 4304 / JCM 9628 / NBRC 100126 / VC-16), this protein is Alanine dehydrogenase.